The sequence spans 260 residues: Ribosome maturation factor RimP (260 aa).

A disordered region spans residues 198–260; it reads QSLGILPPPP…RGDIDPIEGE (63 aa). Basic and acidic residues-rich tracts occupy residues 210–228 and 238–254; these read AKTD…ENGK and NTKE…RGDI.

The protein belongs to the RimP family.

The protein localises to the cytoplasm. Required for maturation of 30S ribosomal subunits. This chain is Ribosome maturation factor RimP, found in Nitrobacter winogradskyi (strain ATCC 25391 / DSM 10237 / CIP 104748 / NCIMB 11846 / Nb-255).